The primary structure comprises 267 residues: Membrane-spanning 4-domains subfamily A member 10 (267 aa).

Topologically, residues 1–61 are cytoplasmic; the sequence is MKAEATVIPS…KKSSLLKELG (61 aa). The chain crosses the membrane as a helical span at residues 62–82; sequence AFHITIALLHLVFGGYLASIV. Topologically, residues 83-91 are extracellular; that stretch reads KNLHLVVLK. The helical transmembrane segment at 92–112 threads the bilayer; that stretch reads SWYPFWGAASFLISGILAITM. At 113–121 the chain is on the cytoplasmic side; that stretch reads KTFSKTYLK. A helical transmembrane segment spans residues 122 to 142; it reads MLCLMTNLISLFCVLSGLFVI. Over 143 to 171 the chain is Extracellular; it reads SKDLFLESPFESPIWRMYPNSTVHIQRLE. A helical transmembrane segment spans residues 172–192; that stretch reads LALLCFTVLELFLPVPTAVTA. Residues 193 to 267 are Cytoplasmic-facing; that stretch reads WRGDCPSAKN…GAAIWTQTAN (75 aa).

The protein belongs to the MS4A family.

It localises to the membrane. Functionally, may be involved in signal transduction as a component of a multimeric receptor complex. This chain is Membrane-spanning 4-domains subfamily A member 10 (MS4A10), found in Homo sapiens (Human).